The sequence spans 146 residues: MPGRAPGSTLARVGSIPAGDDVLDPDEPTYDLPRVAELLGVPVSKVAQQLREGHLVAVRRAGGVVIPQVFFTNSGQVVKSLPGLLTILHDGGYRDTEIMRWLFTPDPSLTITRDGSRDAVSNARPVDALHAHQAREVVRRAQAMAY.

Residues 1-27 are disordered; that stretch reads MPGRAPGSTLARVGSIPAGDDVLDPDE. Thr-9 bears the Phosphothreonine mark.

Monomer in solution. May form homodimers. Interacts with phosphorylated PknL. Post-translationally, phosphorylated by PknL. Phosphorylation negatively regulates DNA-binding activity.

In terms of biological role, binds DNA at low salt concentrations. The protein is DNA-binding protein Rv2175c of Mycobacterium tuberculosis (strain ATCC 25618 / H37Rv).